Consider the following 314-residue polypeptide: Olfactory receptor 1E2 (314 aa).

Residues 1–25 (MMGQNQTSISDFLLLGLPIQPEQQN) lie on the Extracellular side of the membrane. N-linked (GlcNAc...) asparagine glycosylation is present at Asn5. Residues 26–49 (LCYALFLAMYLTTLLGNLLIIVLI) traverse the membrane as a helical segment. Over 50-57 (RLDSHLHT) the chain is Cytoplasmic. The chain crosses the membrane as a helical span at residues 58–79 (PMYLFLSNLSFSDLCFSSVTIP). Over 80-100 (KLLQNMQNQDPSIPYADCLTQ) the chain is Extracellular. Cys97 and Cys189 are disulfide-bonded. The helical transmembrane segment at 101–120 (MHFFLLFGDLESFLLVAMAY) threads the bilayer. The Cytoplasmic segment spans residues 121–139 (DRYVAICFPLHYTAIMSPM). The helical transmembrane segment at 140-158 (LCLSVVALSWVLTTFHAML) threads the bilayer. Topologically, residues 159-196 (HTLLMARLCFCADNVIPHFFCDMSALLKLACSDTRVNE) are extracellular. The helical transmembrane segment at 197–219 (WVIFIMGGLIVVIPFLLILGSYA) threads the bilayer. Residues 220–236 (RIVSSILKVPSFKGICK) are Cytoplasmic-facing. Residues 237–260 (ALSTCGSHLSVVSLFYGTVIGLYL) traverse the membrane as a helical segment. At 261 to 272 (CPSANSSTLKDT) the chain is on the extracellular side. Asn265 is a glycosylation site (N-linked (GlcNAc...) asparagine). A helical transmembrane segment spans residues 273–292 (VMAMMYTVVTPMLNPFIYSL). Residues 293–314 (RNRDMKGALERVICKRKNPFLL) lie on the Cytoplasmic side of the membrane.

This sequence belongs to the G-protein coupled receptor 1 family.

The protein localises to the cell membrane. Odorant receptor. In Pan troglodytes (Chimpanzee), this protein is Olfactory receptor 1E2 (OR1E2).